Reading from the N-terminus, the 283-residue chain is Poly(3-hydroxyalkanoate) depolymerase (283 aa).

Positions 30–253 (PLLIFNGIGA…IDDGHLFLIT (224 aa)) constitute an AB hydrolase-1 domain. Catalysis depends on Ser102, which acts as the Charge relay system.

It belongs to the AB hydrolase superfamily. Lipase family.

Functionally, complements a mutant that does not degrade PHA; might be a lipase. The chain is Poly(3-hydroxyalkanoate) depolymerase from Ectopseudomonas oleovorans (Pseudomonas oleovorans).